Here is a 258-residue protein sequence, read N- to C-terminus: Putative cysteine-rich repeat secretory protein 61 (258 aa).

The signal sequence occupies residues 1–31 (MSSSFIPKRIALVLNLAMVAIQVFFIRSVSS). Gnk2-homologous domains lie at 38 to 140 (YLYH…PTAF) and 146 to 253 (DKNK…IYPF).

The protein belongs to the cysteine-rich repeat secretory protein family.

The protein localises to the secreted. The protein is Putative cysteine-rich repeat secretory protein 61 (CRRSP61) of Arabidopsis thaliana (Mouse-ear cress).